A 241-amino-acid chain; its full sequence is MDMLNQILSINNGGAYGGGKAGGAFDPLTFAMKPQVVIRALCWLFSVVVFGCISSEGWTEKDGKEYCLYNGDGMACKYGNMVGVFGFLASMGFMGGEFLFERMSSVKSRKRYVMADMGFSALWTFMYFVAFLYLWSQWSSSAPPPLGIGAGSMKTAIWFCLFSIVSWALCALMAYKRFLIGAGDEFTSAFETDPANVVHQQAYGYSMDNDNDQYSASPFGQPQQGGMEQQQSGMEYQQPTY.

Residues 30 to 179 (FAMKPQVVIR…CALMAYKRFL (150 aa)) enclose the MARVEL domain. 4 helical membrane passes run 34–54 (PQVVIRALCWLFSVVVFGCIS), 81–101 (MVGVFGFLASMGFMGGEFLFE), 115–135 (ADMGFSALWTFMYFVAFLYLW), and 155–175 (TAIWFCLFSIVSWALCALMAY). Residues 216 to 241 (ASPFGQPQQGGMEQQQSGMEYQQPTY) form a disordered region. A compositionally biased stretch (low complexity) spans 220 to 241 (GQPQQGGMEQQQSGMEYQQPTY).

It belongs to the synaptogyrin family.

It is found in the cytoplasmic vesicle membrane. The protein localises to the cytoplasmic vesicle. It localises to the secretory vesicle membrane. The protein resides in the secretory vesicle. Its subcellular location is the synaptic vesicle membrane. Functionally, required for the correct formation of synaptic vesicles at nerve terminals and has a role in the regulation of the synaptic vesicle exo-endocytic cycle. In Drosophila melanogaster (Fruit fly), this protein is Synaptogyrin.